Reading from the N-terminus, the 556-residue chain is Formate--tetrahydrofolate ligase (556 aa).

65-72 contributes to the ATP binding site; that stretch reads TPAGEGKT.

Belongs to the formate--tetrahydrofolate ligase family.

It carries out the reaction (6S)-5,6,7,8-tetrahydrofolate + formate + ATP = (6R)-10-formyltetrahydrofolate + ADP + phosphate. The protein operates within one-carbon metabolism; tetrahydrofolate interconversion. This is Formate--tetrahydrofolate ligase from Clostridium acidurici (Gottschalkia acidurici).